A 339-amino-acid polypeptide reads, in one-letter code: Dihydroorotate dehydrogenase (quinone) (339 aa).

FMN contacts are provided by residues 61–65 (AGLDK) and Thr-85. Lys-65 lines the substrate pocket. 110 to 114 (NRMGF) is a binding site for substrate. FMN contacts are provided by Asn-138 and Asn-171. Position 171 (Asn-171) interacts with substrate. Residue Ser-174 is the Nucleophile of the active site. Substrate is bound at residue Asn-176. Residues Lys-216 and Thr-244 each contribute to the FMN site. Residue 245–246 (NT) coordinates substrate. FMN is bound by residues Gly-267, Gly-296, and 317–318 (YS).

Belongs to the dihydroorotate dehydrogenase family. Type 2 subfamily. In terms of assembly, monomer. Requires FMN as cofactor.

It localises to the cell membrane. It carries out the reaction (S)-dihydroorotate + a quinone = orotate + a quinol. Its pathway is pyrimidine metabolism; UMP biosynthesis via de novo pathway; orotate from (S)-dihydroorotate (quinone route): step 1/1. In terms of biological role, catalyzes the conversion of dihydroorotate to orotate with quinone as electron acceptor. In Pseudomonas fluorescens (strain Pf0-1), this protein is Dihydroorotate dehydrogenase (quinone).